The following is a 276-amino-acid chain: Type II pantothenate kinase (276 aa).

8–15 (DAGGTLTK) contributes to the ATP binding site. The Proton acceptor role is filled by Glu76. Residues Thr105, 127–131 (GGTIM), Phe143, and Ser230 contribute to the ATP site.

Belongs to the type II pantothenate kinase family. Homodimer.

The protein resides in the cytoplasm. The enzyme catalyses (R)-pantothenate + ATP = (R)-4'-phosphopantothenate + ADP + H(+). Its pathway is cofactor biosynthesis; coenzyme A biosynthesis; CoA from (R)-pantothenate: step 1/5. Catalyzes the phosphorylation of pantothenate (Pan), the first step in CoA biosynthesis. The sequence is that of Type II pantothenate kinase from Bacillus cereus (strain ATCC 10987 / NRS 248).